Consider the following 323-residue polypeptide: Macrolide efflux protein A (323 aa).

Transmembrane regions (helical) follow at residues 6-26 (VLSMSLLGFLPYAVFGPAIGV), 51-71 (LTIVAFYMELPVWMVMIVLFI), 105-125 (SLQSISYIVSPAVAALLYSVW), 128-148 (NAIIAIDVLGAVIASITVLIV), 182-202 (FALLLVGTLYMFVYMPINALF), 219-239 (ITEISFASGMLIGGLLLGLFG), 245-265 (ILLITASIFMMGISLTISGLL), 270-290 (FFIFVVCSAIMGLSVPFYSGV), and 303-323 (YLGRVFSLTGSIMSLAMPIGL).

This sequence belongs to the major facilitator superfamily. Drug:H(+) antiporter-3 (DHA3) (TC 2.A.1.21) family.

It localises to the cell membrane. Confers resistance to 14-membered macrolides including erythromycin and to 15-membered macrolides but not to 16-membered macrolides, lincosamides or analogs of streptogramin B. May function as an efflux pump to regulate intracellular macrolide levels. The chain is Macrolide efflux protein A (mefA) from Enterococcus faecalis (Streptococcus faecalis).